Here is a 127-residue protein sequence, read N- to C-terminus: Large ribosomal subunit protein bL17 (127 aa).

Belongs to the bacterial ribosomal protein bL17 family. In terms of assembly, part of the 50S ribosomal subunit. Contacts protein L32.

The chain is Large ribosomal subunit protein bL17 from Pelobacter propionicus (strain DSM 2379 / NBRC 103807 / OttBd1).